A 310-amino-acid polypeptide reads, in one-letter code: Ribosomal RNA small subunit methyltransferase H (310 aa).

S-adenosyl-L-methionine contacts are provided by residues 33–35, aspartate 53, phenylalanine 79, aspartate 100, and glutamine 107; that span reads AGH.

It belongs to the methyltransferase superfamily. RsmH family.

It is found in the cytoplasm. The enzyme catalyses cytidine(1402) in 16S rRNA + S-adenosyl-L-methionine = N(4)-methylcytidine(1402) in 16S rRNA + S-adenosyl-L-homocysteine + H(+). Specifically methylates the N4 position of cytidine in position 1402 (C1402) of 16S rRNA. The sequence is that of Ribosomal RNA small subunit methyltransferase H from Clostridium botulinum (strain Alaska E43 / Type E3).